A 377-amino-acid polypeptide reads, in one-letter code: 3-dehydroquinate synthase (377 aa).

NAD(+)-binding positions include 115 to 119 (GVIGD), 139 to 140 (TS), Lys152, and Lys162. Zn(2+) contacts are provided by Glu195, His257, and His276.

It belongs to the sugar phosphate cyclases superfamily. Dehydroquinate synthase family. Co(2+) is required as a cofactor. Zn(2+) serves as cofactor. It depends on NAD(+) as a cofactor.

Its subcellular location is the cytoplasm. It catalyses the reaction 7-phospho-2-dehydro-3-deoxy-D-arabino-heptonate = 3-dehydroquinate + phosphate. It participates in metabolic intermediate biosynthesis; chorismate biosynthesis; chorismate from D-erythrose 4-phosphate and phosphoenolpyruvate: step 2/7. Functionally, catalyzes the conversion of 3-deoxy-D-arabino-heptulosonate 7-phosphate (DAHP) to dehydroquinate (DHQ). In Rhizobium etli (strain ATCC 51251 / DSM 11541 / JCM 21823 / NBRC 15573 / CFN 42), this protein is 3-dehydroquinate synthase.